The chain runs to 160 residues: METQRASLSLGRRSLWLLLLGLVLASASAQALSYREAVLRAVDQLNEKSSEANLYRLLELDPPPKQDDENSNIPKPVSFRVKETVCPRTSQQPAEQCDFKENGLLKECVGTVTLDQVGNNFDITCAEPQSVRGLRRLGRKIAHGVKKYGPTVLRIIRIAG.

The first 29 residues, 1–29 (METQRASLSLGRRSLWLLLLGLVLASASA), serve as a signal peptide directing secretion. Residues 30–131 (QALSYREAVL…DITCAEPQSV (102 aa)) constitute a propeptide that is removed on maturation. 2 disulfides stabilise this stretch: Cys-86–Cys-97 and Cys-108–Cys-125.

The protein belongs to the cathelicidin family.

The protein localises to the secreted. Functionally, broad spectrum bactericidal agent. This is Cathelin-related peptide SC5 from Ovis aries (Sheep).